The chain runs to 460 residues: Multidrug resistance protein NorM (460 aa).

The next 12 membrane-spanning stretches (helical) occupy residues 18 to 38 (VLIA…MAGG), 53 to 73 (VWLP…PVVA), 94 to 114 (LALL…FIIA), 126 to 146 (TQGY…FQTL), 159 to 179 (AMII…MFVY), 185 to 205 (PALG…LMFL), 242 to 262 (LPVA…ALLV), 276 to 296 (AINF…AVSI), 315 to 335 (YCGL…TLIF), 349 to 369 (VITL…TDAV), 391 to 411 (FVSY…TDWI), and 415 to 435 (MGVY…AILL).

This sequence belongs to the multi antimicrobial extrusion (MATE) (TC 2.A.66.1) family.

It is found in the cell inner membrane. Functionally, multidrug efflux pump that functions as a Na(+)/drug antiporter. This chain is Multidrug resistance protein NorM (norM), found in Aliivibrio fischeri (strain ATCC 700601 / ES114) (Vibrio fischeri).